A 273-amino-acid chain; its full sequence is Type II pantothenate kinase (273 aa).

8 to 15 is a binding site for ATP; it reads DAGGTLTK. The active-site Proton acceptor is the E76. ATP contacts are provided by residues T105, 127–131, F143, and S230; that span reads GGTIM.

Belongs to the type II pantothenate kinase family. Homodimer.

The protein localises to the cytoplasm. The catalysed reaction is (R)-pantothenate + ATP = (R)-4'-phosphopantothenate + ADP + H(+). The protein operates within cofactor biosynthesis; coenzyme A biosynthesis; CoA from (R)-pantothenate: step 1/5. Functionally, catalyzes the phosphorylation of pantothenate (Pan), the first step in CoA biosynthesis. The protein is Type II pantothenate kinase of Bacillus cereus (strain G9842).